The chain runs to 141 residues: Hemoglobin subunit alpha-D (141 aa).

In terms of domain architecture, Globin spans 1 to 141; that stretch reads VLTAEDKKLI…VAAVLAEKYR (141 aa). The heme b site is built by His-58 and His-87.

Belongs to the globin family. In terms of assembly, heterotetramer of two alpha-D chains and two beta chains. As to expression, red blood cells.

Its function is as follows. Involved in oxygen transport from the lung to the various peripheral tissues. The polypeptide is Hemoglobin subunit alpha-D (HBAD) (Sturnus vulgaris (Starling)).